The chain runs to 359 residues: DNA polymerase IV (359 aa).

The UmuC domain maps to 4-185 (IIHIDMDCYF…LSLRKIPGVG (182 aa)). Positions 8 and 103 each coordinate Mg(2+). E104 is an active-site residue.

Belongs to the DNA polymerase type-Y family. In terms of assembly, monomer. The cofactor is Mg(2+).

It is found in the cytoplasm. The enzyme catalyses DNA(n) + a 2'-deoxyribonucleoside 5'-triphosphate = DNA(n+1) + diphosphate. In terms of biological role, poorly processive, error-prone DNA polymerase involved in untargeted mutagenesis. Copies undamaged DNA at stalled replication forks, which arise in vivo from mismatched or misaligned primer ends. These misaligned primers can be extended by PolIV. Exhibits no 3'-5' exonuclease (proofreading) activity. May be involved in translesional synthesis, in conjunction with the beta clamp from PolIII. This chain is DNA polymerase IV, found in Shewanella sp. (strain ANA-3).